The sequence spans 225 residues: NAD(P)H-hydrate epimerase (225 aa).

In terms of domain architecture, YjeF N-terminal spans 9–209 (MQTIDNYTVE…DIGLLTPQDF (201 aa)). Residue 57–61 (NNGAD) coordinates (6S)-NADPHX. K(+)-binding residues include N58 and D119. Residues 123 to 129 (GTGLNNL) and D152 contribute to the (6S)-NADPHX site. T155 contacts K(+).

Belongs to the NnrE/AIBP family. Requires K(+) as cofactor.

It catalyses the reaction (6R)-NADHX = (6S)-NADHX. It carries out the reaction (6R)-NADPHX = (6S)-NADPHX. Its function is as follows. Catalyzes the epimerization of the S- and R-forms of NAD(P)HX, a damaged form of NAD(P)H that is a result of enzymatic or heat-dependent hydration. This is a prerequisite for the S-specific NAD(P)H-hydrate dehydratase to allow the repair of both epimers of NAD(P)HX. In Leuconostoc kimchii (strain IMSNU 11154 / KCTC 2386 / IH25), this protein is NAD(P)H-hydrate epimerase.